The sequence spans 128 residues: Aspartate 1-decarboxylase (128 aa).

Ser25 serves as the catalytic Schiff-base intermediate with substrate; via pyruvic acid. A Pyruvic acid (Ser) modification is found at Ser25. Position 57 (Thr57) interacts with substrate. The active-site Proton donor is the Tyr58. 73–75 (GAA) lines the substrate pocket.

It belongs to the PanD family. Heterooctamer of four alpha and four beta subunits. Pyruvate serves as cofactor. Is synthesized initially as an inactive proenzyme, which is activated by self-cleavage at a specific serine bond to produce a beta-subunit with a hydroxyl group at its C-terminus and an alpha-subunit with a pyruvoyl group at its N-terminus.

It is found in the cytoplasm. It carries out the reaction L-aspartate + H(+) = beta-alanine + CO2. Its pathway is cofactor biosynthesis; (R)-pantothenate biosynthesis; beta-alanine from L-aspartate: step 1/1. Functionally, catalyzes the pyruvoyl-dependent decarboxylation of aspartate to produce beta-alanine. The polypeptide is Aspartate 1-decarboxylase (Staphylococcus epidermidis (strain ATCC 35984 / DSM 28319 / BCRC 17069 / CCUG 31568 / BM 3577 / RP62A)).